We begin with the raw amino-acid sequence, 266 residues long: Ribosomal RNA small subunit methyltransferase A (266 aa).

S-adenosyl-L-methionine is bound by residues N11, L13, G37, E57, D85, and N104.

The protein belongs to the class I-like SAM-binding methyltransferase superfamily. rRNA adenine N(6)-methyltransferase family. RsmA subfamily.

Its subcellular location is the cytoplasm. The enzyme catalyses adenosine(1518)/adenosine(1519) in 16S rRNA + 4 S-adenosyl-L-methionine = N(6)-dimethyladenosine(1518)/N(6)-dimethyladenosine(1519) in 16S rRNA + 4 S-adenosyl-L-homocysteine + 4 H(+). In terms of biological role, specifically dimethylates two adjacent adenosines (A1518 and A1519) in the loop of a conserved hairpin near the 3'-end of 16S rRNA in the 30S particle. May play a critical role in biogenesis of 30S subunits. This Campylobacter jejuni subsp. jejuni serotype O:2 (strain ATCC 700819 / NCTC 11168) protein is Ribosomal RNA small subunit methyltransferase A.